Reading from the N-terminus, the 312-residue chain is Ribosomal protein L11 methyltransferase (312 aa).

4 residues coordinate S-adenosyl-L-methionine: Thr-160, Gly-181, Asp-203, and Asn-246.

This sequence belongs to the methyltransferase superfamily. PrmA family.

It localises to the cytoplasm. It catalyses the reaction L-lysyl-[protein] + 3 S-adenosyl-L-methionine = N(6),N(6),N(6)-trimethyl-L-lysyl-[protein] + 3 S-adenosyl-L-homocysteine + 3 H(+). Functionally, methylates ribosomal protein L11. This is Ribosomal protein L11 methyltransferase from Staphylococcus haemolyticus (strain JCSC1435).